A 352-amino-acid chain; its full sequence is Guanine nucleotide-binding protein alpha-7 subunit (352 aa).

A lipid anchor (N-myristoyl glycine) is attached at Gly2. Cys4 is lipidated: S-palmitoyl cysteine. The G-alpha domain maps to Arg32–Cys352. Residues Lys35 to Thr48 form a G1 motif region. GTP is bound by residues Gly40 to Ser47, Leu174 to Thr180, Asp199 to Gln203, Asn268 to Asp271, and Ala324. 2 residues coordinate Mg(2+): Ser47 and Thr180. The interval Asp172 to Thr180 is G2 motif. Positions Phe195–Arg204 are G3 motif. The G4 motif stretch occupies residues Ile264–Asp271. The interval Thr322–Thr327 is G5 motif.

The protein belongs to the G-alpha family. G(i/o/t/z) subfamily. In terms of assembly, g proteins are composed of 3 units; alpha, beta and gamma. The alpha chain contains the guanine nucleotide binding site.

Functionally, guanine nucleotide-binding proteins (G proteins) are involved as modulators or transducers in various transmembrane signaling systems. The protein is Guanine nucleotide-binding protein alpha-7 subunit (gpa-7) of Caenorhabditis elegans.